Reading from the N-terminus, the 173-residue chain is Disulfide bond formation protein B (173 aa).

The Cytoplasmic portion of the chain corresponds to 1 to 14 (MIEFLRRIAAHRLA). Residues 15–31 (WGLLAASALFLELSALF) form a helical membrane-spanning segment. At 32–49 (FQYVLGLHPCVMCVYERL) the chain is on the periplasmic side. A disulfide bridge links C41 with C44. The chain crosses the membrane as a helical span at residues 50–65 (AILGVLSAGLLGMVAP). The Cytoplasmic segment spans residues 66 to 72 (EKWYLRW). Residues 73–90 (SALLLWGYSAFRGLQLAL) traverse the membrane as a helical segment. Residues 91-145 (KHVDYQMNPSPFNVCSPFADFPSWAPLDQWLPWLFFPDGDCSEISWQFLSFSMPQ) lie on the Periplasmic side of the membrane. Cysteines 105 and 131 form a disulfide. A helical transmembrane segment spans residues 146–164 (WLVAIFAAYLLVFVVVTIG). Residues 165–173 (NLVKGRCCS) are Cytoplasmic-facing.

It belongs to the DsbB family.

Its subcellular location is the cell inner membrane. In terms of biological role, required for disulfide bond formation in some periplasmic proteins. Acts by oxidizing the DsbA protein. In Aeromonas salmonicida (strain A449), this protein is Disulfide bond formation protein B.